The sequence spans 572 residues: Pentatricopeptide repeat-containing protein At1g26900, mitochondrial (572 aa).

The N-terminal 117 residues, Met1–Arg117, are a transit peptide targeting the mitochondrion. 12 PPR repeats span residues Asn89–Leu123, Asp124–Val158, Phe159–Ser189, Asp191–Val225, Asn226–Leu260, Asp261–Lys291, Asp292–Pro326, Asn327–Leu361, Asp362–Lys392, Asp393–Val427, Asn430–Ala460, and Lys466–Thr496. The type E motif stretch occupies residues Ala501 to Glu572.

The protein belongs to the PPR family. PCMP-E subfamily.

The protein resides in the mitochondrion. The chain is Pentatricopeptide repeat-containing protein At1g26900, mitochondrial (PCMP-E54) from Arabidopsis thaliana (Mouse-ear cress).